The chain runs to 259 residues: Putative hydro-lyase Rxyl_2409 (259 aa).

The disordered stretch occupies residues 1-24 (MGAPGAAEARERIRRGEHAGPTAG). The segment covering 8 to 18 (EARERIRRGEH) has biased composition (basic and acidic residues).

Belongs to the D-glutamate cyclase family.

In Rubrobacter xylanophilus (strain DSM 9941 / JCM 11954 / NBRC 16129 / PRD-1), this protein is Putative hydro-lyase Rxyl_2409.